The sequence spans 24 residues: Coenzyme PQQ synthesis protein A (24 aa).

The pyrroloquinoline quinone (Glu-Tyr) cross-link spans 16–20 (EVTMY).

The protein belongs to the PqqA family.

The protein operates within cofactor biosynthesis; pyrroloquinoline quinone biosynthesis. Functionally, required for coenzyme pyrroloquinoline quinone (PQQ) biosynthesis. PQQ is probably formed by cross-linking a specific glutamate to a specific tyrosine residue and excising these residues from the peptide. This Pseudomonas syringae pv. syringae (strain B728a) protein is Coenzyme PQQ synthesis protein A.